A 539-amino-acid polypeptide reads, in one-letter code: Protein peanut (539 aa).

Phosphoserine is present on residues Ser6 and Ser13. Residues 29–90 form a disordered region; sequence LRDKQQAASA…GASNGDSNKL (62 aa). The segment covering 35–54 has biased composition (low complexity); the sequence is AASASASSATNGSSGSESLV. Residues 139 to 411 enclose the Septin-type G domain; sequence RGFEFTLMVV…ENYRCRKLSE (273 aa). The tract at residues 149-156 is G1 motif; sequence GASGLGKS. GTP contacts are provided by residues 149–156, Thr183, Gly209, 288–296, Gly345, and Arg360; these read GASGLGKS and KADTMTPDE. The tract at residues 206–209 is G3 motif; it reads DTPG. Residues 287 to 290 are G4 motif; it reads AKAD. Positions 420 to 516 form a coiled coil; the sequence is RLSNKNPLTQ…HVTLEELKRR (97 aa). The tract at residues 513 to 539 is disordered; it reads LKRRSLGANSSTDNVDGKKEKKKKGLF. Ser517 is subject to Phosphoserine.

The protein belongs to the TRAFAC class TrmE-Era-EngA-EngB-Septin-like GTPase superfamily. Septin GTPase family. Likely part of a multicomponent septin complex that includes Septin1. Interacts with Septin1. Interacts with hil. Interacts with park. Post-translationally, ubiquitinated by park, leading to its degradation by the proteasome. In terms of tissue distribution, accumulates at the leading edge of the cleavage furrow in dividing cells and cellularizing embryos (at protein level).

The protein resides in the apical cell membrane. It is found in the cleavage furrow. The protein localises to the cytoplasm. Its subcellular location is the cell cortex. Involved in cytokinesis and possibly cellularization. Also acts as an enhancer of the sina gene, thus having a role in photoreceptor development. May be involved in p53-dependent apoptosis. The polypeptide is Protein peanut (pnut) (Drosophila melanogaster (Fruit fly)).